The following is a 374-amino-acid chain: CMP-N-acetylneuraminate-beta-1,4-galactoside alpha-2,3-sialyltransferase (374 aa).

Over 1–8 (MGLLVFVR) the chain is Cytoplasmic. A helical; Signal-anchor for type II membrane protein membrane pass occupies residues 9–28 (NLLLALCLFLVLGFLYYSAW). Residues 29–374 (KLHLLQWEDS…RVITDLSSGI (346 aa)) are Lumenal-facing. N-linked (GlcNAc...) asparagine glycosylation is found at N79 and N170. C159 and C313 are disulfide-bonded.

It belongs to the glycosyltransferase 29 family. As to expression, found in all tissues tested. High expression found in brain, liver, kidney, colon, heart and spleen.

The protein resides in the membrane. The protein localises to the golgi apparatus. It localises to the golgi stack membrane. It carries out the reaction a beta-D-galactosyl-(1-&gt;4)-N-acetyl-beta-D-glucosaminyl derivative + CMP-N-acetyl-beta-neuraminate = an N-acetyl-alpha-neuraminyl-(2-&gt;3)-beta-D-galactosyl-(1-&gt;4)-N-acetyl-beta-D-glucosaminyl derivative + CMP + H(+). Its pathway is protein modification; protein glycosylation. Its function is as follows. Catalyzes the formation of the NeuAc-alpha-2,3-Gal-beta-1,4-GlcNAc-, NeuAc-alpha-2,3-Gal-beta-1,3-GlcNAc- and NeuAc-alpha-2,3-Gal-beta-1,3-GalNAc- sequences found in terminal carbohydrate groups of glycoproteins and glycolipids. The highest activity is toward Gal-beta-1,3-GlcNAc and the lowest toward Gal-beta-1,3-GalNAc. In Mus musculus (Mouse), this protein is CMP-N-acetylneuraminate-beta-1,4-galactoside alpha-2,3-sialyltransferase (St3gal3).